The primary structure comprises 545 residues: CTP synthase (545 aa).

The interval Met1–Leu266 is amidoligase domain. Ser14 lines the CTP pocket. Ser14 contacts UTP. ATP is bound by residues Ser15–Ile20 and Asp72. Residues Asp72 and Glu140 each contribute to the Mg(2+) site. CTP-binding positions include Asp147 to Glu149, Lys187 to Gln192, and Lys223. UTP contacts are provided by residues Lys187–Gln192 and Lys223. Lys239–Val241 lines the ATP pocket. The Glutamine amidotransferase type-1 domain maps to Thr291 to Arg542. Residue Gly352 participates in L-glutamine binding. Cys379 serves as the catalytic Nucleophile; for glutamine hydrolysis. Residues Leu380–Gln383, Glu403, and Arg470 contribute to the L-glutamine site. Residues His515 and Glu517 contribute to the active site.

This sequence belongs to the CTP synthase family. In terms of assembly, homotetramer.

It catalyses the reaction UTP + L-glutamine + ATP + H2O = CTP + L-glutamate + ADP + phosphate + 2 H(+). The catalysed reaction is L-glutamine + H2O = L-glutamate + NH4(+). The enzyme catalyses UTP + NH4(+) + ATP = CTP + ADP + phosphate + 2 H(+). The protein operates within pyrimidine metabolism; CTP biosynthesis via de novo pathway; CTP from UDP: step 2/2. Allosterically activated by GTP, when glutamine is the substrate; GTP has no effect on the reaction when ammonia is the substrate. The allosteric effector GTP functions by stabilizing the protein conformation that binds the tetrahedral intermediate(s) formed during glutamine hydrolysis. Inhibited by the product CTP, via allosteric rather than competitive inhibition. In terms of biological role, catalyzes the ATP-dependent amination of UTP to CTP with either L-glutamine or ammonia as the source of nitrogen. Regulates intracellular CTP levels through interactions with the four ribonucleotide triphosphates. This is CTP synthase from Yersinia pseudotuberculosis serotype O:1b (strain IP 31758).